The chain runs to 182 residues: Large ribosomal subunit protein uL10 (182 aa).

This sequence belongs to the universal ribosomal protein uL10 family. Part of the ribosomal stalk of the 50S ribosomal subunit. The N-terminus interacts with L11 and the large rRNA to form the base of the stalk. The C-terminus forms an elongated spine to which L12 dimers bind in a sequential fashion forming a multimeric L10(L12)X complex.

Forms part of the ribosomal stalk, playing a central role in the interaction of the ribosome with GTP-bound translation factors. In Parafrankia sp. (strain EAN1pec), this protein is Large ribosomal subunit protein uL10.